The chain runs to 61 residues: Beta-defensin 133 (61 aa).

The N-terminal stretch at 1–23 (MKIHVFLFVLFFFLVPIATRVKC) is a signal peptide. 2 disulfide bridges follow: Cys-31-Cys-59 and Cys-38-Cys-52.

Belongs to the beta-defensin family.

It localises to the secreted. In terms of biological role, has antibacterial activity. The protein is Beta-defensin 133 (DEFB133) of Homo sapiens (Human).